The primary structure comprises 299 residues: HTH-type transcriptional regulator CrgA (299 aa).

Positions 1-60 constitute an HTH lysR-type domain; that stretch reads MKTNSEELTVFVQVVESGSFSRAAEQLAMANSAVSRIVKRLEEKLGVNLLNRTTRQLSLT. The segment at residues 20 to 39 is a DNA-binding region (H-T-H motif); it reads FSRAAEQLAMANSAVSRIVK.

The protein belongs to the LysR transcriptional regulatory family. As to quaternary structure, forms oligomers. Oligomerization is required for DNA binding.

Its function is as follows. Involved in the regulation of bacterial adhesion to host epithelial cells. May play a central regulatory role in meningococcal adhesion, particularly in switching from initial adhesion to intimate adhesion by downregulating the bacterial surface structures that hinder this adhesion. During intimate adhesion, negatively regulates the expression of pilC1, encoding a pilus-associated protein, pilE, encoding the pilin, and sia genes, encoding the capsule. Also negatively regulates its own expression. May also regulate other genes that are involved in intimate adhesion. Binds specifically to the promoter region of pilC1 and crgA (both harboring a CREN element), and pilE and sia (both devoid of a CREN element). Acts through interaction with RNA polymerase (RNAP). Interaction with RNAP leads to the production of short abortive transcripts, suggesting that CrgA may act by preventing RNAP from clearing the promoter. This chain is HTH-type transcriptional regulator CrgA, found in Neisseria meningitidis serogroup C (strain 8013).